The following is a 270-amino-acid chain: MIPKLPLSAFIICLNEEAYLGKCIESLERCAEIVIVDSGSTDGTAALVQSYIDAGWPIRFMYEPWRGYAGQKQFALEQCSQPWCFNIDADERLDKALRELLPELLAASDEIVGWRVARRPYLIGYGYTPENVRERRNLRLIRRGKGRYDLSQKVHEGIVPEGNVGNARTGSLLHFRPLVMDEQILKENKYSTLKADQQVESGKRPRFYKLIFTPPIYFLRLYFRNGLWRCGLSGFIEAMTGAVYAFLTAAKIYQRHALKARPNVDDALSH.

Belongs to the glycosyltransferase 2 family. WaaE/KdtX subfamily.

The protein operates within bacterial outer membrane biogenesis; LPS core biosynthesis. This is Lipopolysaccharide core biosynthesis glycosyltransferase LpsC (lpsC) from Rhizobium meliloti (strain 1021) (Ensifer meliloti).